Here is a 66-residue protein sequence, read N- to C-terminus: Large ribosomal subunit protein bL35 (66 aa).

It belongs to the bacterial ribosomal protein bL35 family.

This chain is Large ribosomal subunit protein bL35, found in Parvibaculum lavamentivorans (strain DS-1 / DSM 13023 / NCIMB 13966).